The following is a 513-amino-acid chain: Histidine ammonia-lyase (513 aa).

Positions 145–147 (ASG) form a cross-link, 5-imidazolinone (Ala-Gly). Residue Ser-146 is modified to 2,3-didehydroalanine (Ser).

The protein belongs to the PAL/histidase family. In terms of processing, contains an active site 4-methylidene-imidazol-5-one (MIO), which is formed autocatalytically by cyclization and dehydration of residues Ala-Ser-Gly.

The protein resides in the cytoplasm. It catalyses the reaction L-histidine = trans-urocanate + NH4(+). It participates in amino-acid degradation; L-histidine degradation into L-glutamate; N-formimidoyl-L-glutamate from L-histidine: step 1/3. The chain is Histidine ammonia-lyase from Vibrio vulnificus (strain CMCP6).